Consider the following 105-residue polypeptide: Probable tetrachloroethene reductive dehalogenase membrane anchor protein (105 aa).

The next 3 membrane-spanning stretches (helical) occupy residues 3 to 23, 35 to 55, and 66 to 86; these read IYDV…QYGI, IPLQ…LAWG, and AIGM…IITY.

It belongs to the PceB family.

It is found in the cell membrane. May act as a membrane anchor for the tetrachloroethene reductive dehalogenase PceA. The chain is Probable tetrachloroethene reductive dehalogenase membrane anchor protein from Desulfitobacterium hafniense (Desulfitobacterium frappieri).